Consider the following 294-residue polypeptide: tRNA pseudouridine synthase B (294 aa).

Residue aspartate 39 is the Nucleophile of the active site.

Belongs to the pseudouridine synthase TruB family. Type 1 subfamily.

It catalyses the reaction uridine(55) in tRNA = pseudouridine(55) in tRNA. Functionally, responsible for synthesis of pseudouridine from uracil-55 in the psi GC loop of transfer RNAs. The sequence is that of tRNA pseudouridine synthase B from Streptococcus pyogenes serotype M28 (strain MGAS6180).